The chain runs to 82 residues: MPSPEMEARLKQIVAEQLGVDESKIVPTARFTEDLNADSLDLVEMIMELEEAFGVEIPDEDAEKIITVQDALNYIEQKLQAA.

Positions 4 to 79 (PEMEARLKQI…DALNYIEQKL (76 aa)) constitute a Carrier domain. Serine 39 bears the O-(pantetheine 4'-phosphoryl)serine mark.

It belongs to the acyl carrier protein (ACP) family. In terms of processing, 4'-phosphopantetheine is transferred from CoA to a specific serine of apo-ACP by AcpS. This modification is essential for activity because fatty acids are bound in thioester linkage to the sulfhydryl of the prosthetic group.

It localises to the cytoplasm. It participates in lipid metabolism; fatty acid biosynthesis. Its function is as follows. Carrier of the growing fatty acid chain in fatty acid biosynthesis. This chain is Acyl carrier protein, found in Roseiflexus castenholzii (strain DSM 13941 / HLO8).